Reading from the N-terminus, the 184-residue chain is MVRAWRILQEETDDPRDALYSDESVSLEQLAQVGVEYFKFDADTFEQNDDYLKLKNNRGYSYSDTISVSRATLPDFDAKIKSFFEEHLHTDDEIRFILDGSGYFDVRDLDGRQLRDCWIRIECVKGDLLVLPSGIYHRFTLDKKDYIKALRLFIGVPVWTPHNRPADSMKERLDYVSKYLTATT.

Fe(2+) contacts are provided by histidine 87, histidine 89, glutamate 93, and histidine 137. Ni(2+)-binding residues include histidine 87, histidine 89, glutamate 93, and histidine 137.

It belongs to the acireductone dioxygenase (ARD) family. It depends on Fe(2+) as a cofactor. The cofactor is Ni(2+).

The protein localises to the cytoplasm. Its subcellular location is the nucleus. It catalyses the reaction 1,2-dihydroxy-5-(methylsulfanyl)pent-1-en-3-one + O2 = 4-methylsulfanyl-2-oxobutanoate + formate + 2 H(+). The enzyme catalyses 1,2-dihydroxy-5-(methylsulfanyl)pent-1-en-3-one + O2 = 3-(methylsulfanyl)propanoate + CO + formate + 2 H(+). The protein operates within amino-acid biosynthesis; L-methionine biosynthesis via salvage pathway; L-methionine from S-methyl-5-thio-alpha-D-ribose 1-phosphate: step 5/6. Its function is as follows. Catalyzes 2 different reactions between oxygen and the acireductone 1,2-dihydroxy-3-keto-5-methylthiopentene (DHK-MTPene) depending upon the metal bound in the active site. Fe-containing acireductone dioxygenase (Fe-ARD) produces formate and 2-keto-4-methylthiobutyrate (KMTB), the alpha-ketoacid precursor of methionine in the methionine recycle pathway. Ni-containing acireductone dioxygenase (Ni-ARD) produces methylthiopropionate, carbon monoxide and formate, and does not lie on the methionine recycle pathway. This is Acireductone dioxygenase from Ciona intestinalis (Transparent sea squirt).